Consider the following 283-residue polypeptide: Probable endonuclease 4 (283 aa).

The Zn(2+) site is built by histidine 69, histidine 113, glutamate 148, aspartate 182, histidine 185, histidine 217, aspartate 230, histidine 232, and glutamate 262.

The protein belongs to the AP endonuclease 2 family. Zn(2+) is required as a cofactor.

The catalysed reaction is Endonucleolytic cleavage to 5'-phosphooligonucleotide end-products.. Endonuclease IV plays a role in DNA repair. It cleaves phosphodiester bonds at apurinic or apyrimidinic (AP) sites, generating a 3'-hydroxyl group and a 5'-terminal sugar phosphate. In Bifidobacterium longum (strain DJO10A), this protein is Probable endonuclease 4.